Consider the following 31-residue polypeptide: Cytochrome b6-f complex subunit 6 (31 aa).

A helical transmembrane segment spans residues 4-24 (ITSYFGFLLAALTITSALFIG).

The protein belongs to the PetL family. In terms of assembly, the 4 large subunits of the cytochrome b6-f complex are cytochrome b6, subunit IV (17 kDa polypeptide, PetD), cytochrome f and the Rieske protein, while the 4 small subunits are PetG, PetL, PetM and PetN. The complex functions as a dimer.

Its subcellular location is the plastid. It localises to the chloroplast thylakoid membrane. Component of the cytochrome b6-f complex, which mediates electron transfer between photosystem II (PSII) and photosystem I (PSI), cyclic electron flow around PSI, and state transitions. PetL is important for photoautotrophic growth as well as for electron transfer efficiency and stability of the cytochrome b6-f complex. The chain is Cytochrome b6-f complex subunit 6 from Citrus sinensis (Sweet orange).